The chain runs to 264 residues: 3-methyl-2-oxobutanoate hydroxymethyltransferase (264 aa).

Residues Asp-45 and Asp-84 each contribute to the Mg(2+) site. Residues 45 to 46 (DS), Asp-84, and Lys-112 contribute to the 3-methyl-2-oxobutanoate site. Glu-114 is a Mg(2+) binding site. Glu-181 functions as the Proton acceptor in the catalytic mechanism.

The protein belongs to the PanB family. In terms of assembly, homodecamer; pentamer of dimers. Mg(2+) is required as a cofactor.

Its subcellular location is the cytoplasm. The catalysed reaction is 3-methyl-2-oxobutanoate + (6R)-5,10-methylene-5,6,7,8-tetrahydrofolate + H2O = 2-dehydropantoate + (6S)-5,6,7,8-tetrahydrofolate. Its pathway is cofactor biosynthesis; (R)-pantothenate biosynthesis; (R)-pantoate from 3-methyl-2-oxobutanoate: step 1/2. Its function is as follows. Catalyzes the reversible reaction in which hydroxymethyl group from 5,10-methylenetetrahydrofolate is transferred onto alpha-ketoisovalerate to form ketopantoate. This is 3-methyl-2-oxobutanoate hydroxymethyltransferase from Escherichia coli O17:K52:H18 (strain UMN026 / ExPEC).